The sequence spans 55 residues: MKPVSRRTLDWIYSVLLLAIVLISWGCIIYASMVSARRQLRKKYPDKIFGTNENL.

A helical transmembrane segment spans residues 11-31; the sequence is WIYSVLLLAIVLISWGCIIYA.

The protein resides in the membrane. This Homo sapiens (Human) protein is Small integral membrane protein 27.